The following is a 188-amino-acid chain: Threonylcarbamoyl-AMP synthase (188 aa).

The 186-residue stretch at 3 to 188 (QLHPSDIKDV…RSGKILRNGQ (186 aa)) folds into the YrdC-like domain.

The protein belongs to the SUA5 family. TsaC subfamily.

The protein resides in the cytoplasm. The catalysed reaction is L-threonine + hydrogencarbonate + ATP = L-threonylcarbamoyladenylate + diphosphate + H2O. In terms of biological role, required for the formation of a threonylcarbamoyl group on adenosine at position 37 (t(6)A37) in tRNAs that read codons beginning with adenine. Catalyzes the conversion of L-threonine, HCO(3)(-)/CO(2) and ATP to give threonylcarbamoyl-AMP (TC-AMP) as the acyladenylate intermediate, with the release of diphosphate. The chain is Threonylcarbamoyl-AMP synthase from Shewanella oneidensis (strain ATCC 700550 / JCM 31522 / CIP 106686 / LMG 19005 / NCIMB 14063 / MR-1).